The chain runs to 353 residues: Replication factor C subunit 2 (353 aa).

M1 carries the post-translational modification N-acetylmethionine. Residues V28, R32, 65–73, N171, and R229 contribute to the ATP site; that span reads GPPGTGKTS.

The protein belongs to the activator 1 small subunits family. Replication factor C (RFC) is a heteropentamer of subunits RFC1, RFC2, RFC3, RFC4 and RFC5 and forms a complex with POL30/PCNA in the presence of ATP. Component of the RAD24-RFC complex which consists of RAD14, RFC2, RFC3, RFC4 and RFC5 and associates with the checkpoint clamp DDC1:MEC3:RAD17 complex. Component of the ELG1-RFC complex which consists of ELG1, RFC2, RFC3, RFC4 and RFC5. Component of the CTF18-RFC complex, which consists of CTF18, CTF8, DCC1, RFC2, RFC3, RFC4 and RFC5. RFC2 interacts with ECO1.

It localises to the nucleus. Its function is as follows. Component of ATP-dependent clamp loader (RFC and RFC-like) complexes for DNA clamps, such as the POL30/PCNA homotrimer and the checkpoint clamp DDC1:MEC3:RAD17 complex. During a clamp loading circle, the RFC:clamp complex binds to DNA and the recognition of the double-stranded/single-stranded junction stimulates ATP hydrolysis by RFC. The complex presumably provides bipartite ATP sites in which one subunit supplies a catalytic site for hydrolysis of ATP bound to the neighboring subunit. Dissociation of RFC from the clamp leaves the clamp encircling DNA. Component of the replication factor C (RFC or activator 1) complex which loads POL30/PCNA and acts during elongation of primed DNA templates by DNA polymerase delta and epsilon. RFC has an essential but redundant activity in sister chromatid cohesion establishment. Component of the RFC-like complex CTF18-RFC which is required for efficient establishment of chromosome cohesion during S-phase and may load or unload POL30/PCNA. Component of the RFC-like RAD24-RFC complex which loads the checkpoint clamp DDC1:MEC3:RAD17 complex and is involved in DNA repair pathways. Component of the RFC-like ELG1-RFC complex which appears to have a role in DNA replication, replication fork re-start, recombination and repair. RFC2 binds ATP and single-stranded DNA. This Saccharomyces cerevisiae (strain ATCC 204508 / S288c) (Baker's yeast) protein is Replication factor C subunit 2 (RFC2).